The following is an 86-amino-acid chain: U1-theraphotoxin-Pc1a (86 aa).

A signal peptide spans 1-21 (MMRVLIVTAVFTFFLVLTSSG). Positions 22 to 49 (HDEDNEQRNILEGMFLDRAIETPKGLEE) are excised as a propeptide. Intrachain disulfides connect C53–C70, C60–C75, and C69–C80. V84 bears the Valine amide mark.

Expressed by the venom gland.

The protein resides in the secreted. Possesses strong antiplasmodial activity against the intra-erythrocyte stage of P.falciparum in vitro. IC(50) for inhibiting P.falciparum growth is 1.59 uM. Interacts with infected and healthy erythrocytes. Does not lyse erythrocytes, is not cytotoxic to nucleated mammalian cells, and does not inhibit neuromuscular function. Has neither antibacterial nor antifungal activity. This is U1-theraphotoxin-Pc1a from Psalmopoeus cambridgei (Trinidad chevron tarantula).